We begin with the raw amino-acid sequence, 430 residues long: Adenylosuccinate synthetase (430 aa).

GTP is bound by residues 13-19 (GDEGKGK) and 41-43 (GHT). Aspartate 14 functions as the Proton acceptor in the catalytic mechanism. Mg(2+)-binding residues include aspartate 14 and glycine 41. IMP contacts are provided by residues 14 to 17 (DEGK), 39 to 42 (NAGH), threonine 130, arginine 144, glutamine 225, threonine 240, and arginine 304. The active-site Proton donor is the histidine 42. 300–306 (ASTGRPR) contacts substrate. Residues arginine 306, 332–334 (KLD), and 414–416 (STG) contribute to the GTP site.

It belongs to the adenylosuccinate synthetase family. As to quaternary structure, homodimer. The cofactor is Mg(2+).

The protein localises to the cytoplasm. It carries out the reaction IMP + L-aspartate + GTP = N(6)-(1,2-dicarboxyethyl)-AMP + GDP + phosphate + 2 H(+). It participates in purine metabolism; AMP biosynthesis via de novo pathway; AMP from IMP: step 1/2. Functionally, plays an important role in the de novo pathway of purine nucleotide biosynthesis. Catalyzes the first committed step in the biosynthesis of AMP from IMP. The chain is Adenylosuccinate synthetase from Xanthomonas oryzae pv. oryzae (strain PXO99A).